We begin with the raw amino-acid sequence, 362 residues long: 3-dehydroquinate synthase (362 aa).

NAD(+)-binding positions include S72–K77, G106–D110, T130–T131, K142, and K151. Zn(2+) contacts are provided by E184, H246, and H263.

The protein belongs to the sugar phosphate cyclases superfamily. Dehydroquinate synthase family. Requires Co(2+) as cofactor. The cofactor is Zn(2+). NAD(+) is required as a cofactor.

The protein resides in the cytoplasm. The enzyme catalyses 7-phospho-2-dehydro-3-deoxy-D-arabino-heptonate = 3-dehydroquinate + phosphate. It functions in the pathway metabolic intermediate biosynthesis; chorismate biosynthesis; chorismate from D-erythrose 4-phosphate and phosphoenolpyruvate: step 2/7. Its function is as follows. Catalyzes the conversion of 3-deoxy-D-arabino-heptulosonate 7-phosphate (DAHP) to dehydroquinate (DHQ). The protein is 3-dehydroquinate synthase of Bacillus velezensis (strain DSM 23117 / BGSC 10A6 / LMG 26770 / FZB42) (Bacillus amyloliquefaciens subsp. plantarum).